The chain runs to 185 residues: Ribosome-recycling factor (185 aa).

The protein belongs to the RRF family.

The protein resides in the cytoplasm. Responsible for the release of ribosomes from messenger RNA at the termination of protein biosynthesis. May increase the efficiency of translation by recycling ribosomes from one round of translation to another. The polypeptide is Ribosome-recycling factor (Clostridium beijerinckii (strain ATCC 51743 / NCIMB 8052) (Clostridium acetobutylicum)).